The primary structure comprises 436 residues: Trigger factor (436 aa).

Disordered regions lie at residues 1 to 26 (MQVSVETTEGLGRRMTVQVPAERVEN) and 81 to 100 (QESLRPAGNPHIEPKRTGEG). The 86-residue stretch at 161-246 (EDRVVIDFHG…VKRVEEPQLP (86 aa)) folds into the PPIase FKBP-type domain.

This sequence belongs to the FKBP-type PPIase family. Tig subfamily.

The protein resides in the cytoplasm. The catalysed reaction is [protein]-peptidylproline (omega=180) = [protein]-peptidylproline (omega=0). In terms of biological role, involved in protein export. Acts as a chaperone by maintaining the newly synthesized protein in an open conformation. Functions as a peptidyl-prolyl cis-trans isomerase. The polypeptide is Trigger factor (Halorhodospira halophila (strain DSM 244 / SL1) (Ectothiorhodospira halophila (strain DSM 244 / SL1))).